The sequence spans 919 residues: Tight junction protein ZO-3 (919 aa).

The 83-residue stretch at 11 to 93 folds into the PDZ 1 domain; that stretch reads TATLSKDPRR…MANITVKRPR (83 aa). The interval 92 to 173 is disordered; sequence PRRIHLPATK…SPGGGSEANG (82 aa). Ser112 is subject to Phosphoserine. Over residues 117–131 the composition is skewed to basic and acidic residues; that stretch reads GPQRVEEVDQGRGYD. Ser136 is modified (phosphoserine). Positions 147–163 are enriched in basic residues; that stretch reads RRPRPGRRGRAGSHGRR. Phosphoserine is present on residues Ser164, Ser169, Ser203, and Ser319. Positions 195 to 272 constitute a PDZ 2 domain; it reads SVLVKRRDSE…KLSLLVLRDR (78 aa). A disordered region spans residues 279-377; the sequence is IPPAVSDSDS…SSQSMEDRGY (99 aa). A Phosphothreonine modification is found at Thr325. The residue at position 327 (Ser327) is a Phosphoserine. Basic and acidic residues predominate over residues 332–360; it reads PRLRRESSVDSRTISEPDEQRSELPRESS. A Phosphoserine modification is found at Ser371. A PDZ 3 domain is found at 380 to 446; it reads DTRVVRFLKG…LTREEAVQFL (67 aa). One can recognise an SH3 domain in the interval 475–549; it reads GDSFYIRTHF…PNQSRAEQLA (75 aa). The Guanylate kinase-like domain occupies 580–761; the sequence is LRRGAKKTTQ…WYQELKAIIR (182 aa). Phosphoserine is present on Ser591. Residues 791–801 show a composition bias toward low complexity; that stretch reads ADSSADLSCDS. 2 disordered regions span residues 791–886 and 899–919; these read ADSS…DSMR and RVHD…ATDL. Over residues 812–828 the composition is skewed to gly residues; that stretch reads EGGAYTDGEGYTDGEGG. Phosphoserine is present on residues Ser856, Ser905, and Ser906.

Belongs to the MAGUK family. Interacts with occludin OCLN, claudins and TPJ1. Interacts with PATJ. Interacts with UBN1. Interacts with FASLG. Interacts with CCND1. Post-translationally, phosphorylated.

Its subcellular location is the cell membrane. The protein resides in the cell junction. It is found in the tight junction. The protein localises to the nucleus. Its function is as follows. TJP1, TJP2, and TJP3 are closely related scaffolding proteins that link tight junction (TJ) transmembrane proteins such as claudins, junctional adhesion molecules, and occludin to the actin cytoskeleton. The tight junction acts to limit movement of substances through the paracellular space and as a boundary between the compositionally distinct apical and basolateral plasma membrane domains of epithelial and endothelial cells. Binds and recruits PATJ to tight junctions where it connects and stabilizes apical and lateral components of tight junctions. Promotes cell-cycle progression through the sequestration of cyclin D1 (CCND1) at tight junctions during mitosis which prevents CCND1 degradation during M-phase and enables S-phase transition. With TJP1 and TJP2, participates in the junctional retention and stability of the transcription factor DBPA, but is not involved in its shuttling to the nucleus. Contrary to TJP2, TJP3 is dispensable for individual viability, embryonic development, epithelial differentiation, and the establishment of TJs, at least in the laboratory environment. This chain is Tight junction protein ZO-3 (TJP3), found in Homo sapiens (Human).